We begin with the raw amino-acid sequence, 241 residues long: Small ribosomal subunit protein uS2 (241 aa).

The protein belongs to the universal ribosomal protein uS2 family.

The polypeptide is Small ribosomal subunit protein uS2 (Sodalis glossinidius (strain morsitans)).